The chain runs to 320 residues: N-acetylneuraminate lyase (320 aa).

2 residues coordinate aceneuramate: Thr-51 and Thr-52. The Proton donor role is filled by Tyr-143. Residue Lys-173 is the Schiff-base intermediate with substrate of the active site. Aceneuramate-binding residues include Ser-175, Gly-199, Asp-201, Glu-202, and Ser-218.

It belongs to the DapA family. NanA subfamily. As to quaternary structure, homotetramer.

It localises to the cytoplasm. The enzyme catalyses aceneuramate = aldehydo-N-acetyl-D-mannosamine + pyruvate. It participates in amino-sugar metabolism; N-acetylneuraminate degradation. Its function is as follows. Catalyzes the cleavage of N-acetylneuraminic acid (sialic acid) to form pyruvate and N-acetylmannosamine via a Schiff base intermediate. It prevents sialic acids from being recycled and returning to the cell surface. Involved in the N-glycolylneuraminic acid (Neu5Gc) degradation pathway. This chain is N-acetylneuraminate lyase, found in Rattus norvegicus (Rat).